A 570-amino-acid chain; its full sequence is Cytoplasmic polyadenylation element-binding protein 2 (570 aa).

Residues leucine 434–phenylalanine 516 form the RRM domain.

In terms of tissue distribution, expressed specifically in the spermatogenic germ line.

In terms of biological role, cytoplasmic polyadenylation element binding protein that binds to and regulates the translation of specific mRNAs. Not required for oogenesis. This chain is Cytoplasmic polyadenylation element-binding protein 2 (cpb-2), found in Caenorhabditis elegans.